A 268-amino-acid chain; its full sequence is uncharacterized protein (268 aa).

The next 3 helical transmembrane spans lie at 169 to 189 (AIIY…QGFA), 190 to 210 (GVKT…LWLL), and 225 to 245 (IFAG…LSVF).

The protein resides in the cell membrane. This is an uncharacterized protein from Bacillus subtilis (strain 168).